Reading from the N-terminus, the 358-residue chain is MGAVWSALLVGGGLAGALFVWLLRGGPGDTGKDGDAEQEKDAPLGGAAIPGGHQSGSSGLSPGPSGQELVTKPEHLQESNGHLISKTKDLGKLQAASWRLQNPSREVCDNSREHVPSGQFPDTEAPATSETSNSRSYSEVSRNESLESPMGEWGFQKGQEISAKAATCFAEKLPSSNLLKNRAKEEMSLSDLNSQDRVDHEEWEMVPRHSSWGDVGVGGSLKAPVLNLNQGMDNGRSTLVEARGQQVHGKMERVAVMPAGSQQVSVRFQVHYVTSTDVQFIAVTGDHECLGRWNTYIPLHYNKDGFWSHSIFLPADTVVEWKFVLVENGGVTRWEECSNRFLETGHEDKVVHAWWGIH.

Residues 1–6 (MGAVWS) lie on the Extracellular side of the membrane. The chain crosses the membrane as a helical span at residues 7-23 (ALLVGGGLAGALFVWLL). Over 24–358 (RGGPGDTGKD…KVVHAWWGIH (335 aa)) the chain is Cytoplasmic. The segment covering 30-42 (TGKDGDAEQEKDA) has biased composition (basic and acidic residues). 2 disordered regions span residues 30–70 (TGKD…QELV) and 104–151 (SREV…SPMG). Residues 50–66 (PGGHQSGSSGLSPGPSG) show a composition bias toward low complexity. Residue Ser65 is modified to Phosphoserine. Basic and acidic residues predominate over residues 106–115 (EVCDNSREHV). A Phosphoserine modification is found at Ser117. The segment covering 126–140 (PATSETSNSRSYSEV) has biased composition (polar residues). A phosphoserine mark is found at Ser148, Ser175, Ser188, and Ser194. The short motif at 200–206 (HEEWEMV) is the LIR element. Ser210, Ser211, and Ser220 each carry phosphoserine. One can recognise a CBM20 domain in the interval 258 to 357 (PAGSQQVSVR…DKVVHAWWGI (100 aa)).

In terms of assembly, interacts with the ATG8 family proteins GABARAP and GABARAPL1. Interacts with several glycogen-associated proteins, such as GYS2 (liver glycogen synthase), GDE (glycogen debranching enzyme), GBE1 (glycogen branching enzyme 1) and EPM2A (Laforin). Ubiquitinated, which leads to proteasomal degradation. In terms of tissue distribution, expressed at high level in skeletal and cardiac muscles. Moderately expressed in liver and placenta. No expression is found in pancreas, kidney or lung. Present in skeletal muscle, heart and placenta (at protein level).

The protein localises to the preautophagosomal structure membrane. Its subcellular location is the endoplasmic reticulum membrane. It is found in the cell membrane. The protein resides in the sarcolemma. It localises to the T-tubule. In terms of biological role, acts as a cargo receptor for glycogen. Delivers its cargo to an autophagic pathway called glycophagy, resulting in the transport of glycogen to lysosomes. In Homo sapiens (Human), this protein is Starch-binding domain-containing protein 1.